The following is a 558-amino-acid chain: CTP synthase (558 aa).

Residues 1–267 form an amidoligase domain region; that stretch reads MAKFVFVTGG…CLEMLDVLNL (267 aa). Ser-13 serves as a coordination point for CTP. Ser-13 provides a ligand contact to UTP. ATP-binding positions include 14 to 19 and Asp-71; that span reads SIGKGI. Mg(2+) contacts are provided by Asp-71 and Glu-141. CTP is bound by residues 148–150, 188–193, and Lys-224; these read DIE and KTKPTQ. UTP contacts are provided by residues 188 to 193 and Lys-224; that span reads KTKPTQ. The Glutamine amidotransferase type-1 domain maps to 292–534; the sequence is KVALVGKYVQ…IEAAQLRLPA (243 aa). Gly-354 is an L-glutamine binding site. The active-site Nucleophile; for glutamine hydrolysis is Cys-381. L-glutamine-binding positions include 382–385, Glu-405, and Arg-462; that span reads LGMQ. Catalysis depends on residues His-507 and Glu-509. Positions 536 to 558 are disordered; sequence PDEALRRQSQTNISAQEKPSRIG. Residues 542–552 are compositionally biased toward polar residues; sequence RQSQTNISAQE.

The protein belongs to the CTP synthase family. As to quaternary structure, homotetramer.

It catalyses the reaction UTP + L-glutamine + ATP + H2O = CTP + L-glutamate + ADP + phosphate + 2 H(+). It carries out the reaction L-glutamine + H2O = L-glutamate + NH4(+). The catalysed reaction is UTP + NH4(+) + ATP = CTP + ADP + phosphate + 2 H(+). It functions in the pathway pyrimidine metabolism; CTP biosynthesis via de novo pathway; CTP from UDP: step 2/2. With respect to regulation, allosterically activated by GTP, when glutamine is the substrate; GTP has no effect on the reaction when ammonia is the substrate. The allosteric effector GTP functions by stabilizing the protein conformation that binds the tetrahedral intermediate(s) formed during glutamine hydrolysis. Inhibited by the product CTP, via allosteric rather than competitive inhibition. Functionally, catalyzes the ATP-dependent amination of UTP to CTP with either L-glutamine or ammonia as the source of nitrogen. Regulates intracellular CTP levels through interactions with the four ribonucleotide triphosphates. This Prochlorococcus marinus (strain MIT 9303) protein is CTP synthase.